Consider the following 370-residue polypeptide: Anthranilate phosphoribosyltransferase (370 aa).

Residues Gly82, 85–86 (GD), Thr90, 92–95 (NVST), 110–118 (KHGNRAATS), and Ser122 contribute to the 5-phospho-alpha-D-ribose 1-diphosphate site. Gly82 is a binding site for anthranilate. Residue Ser94 participates in Mg(2+) binding. Position 113 (Asn113) interacts with anthranilate. Arg168 contacts anthranilate. Mg(2+) contacts are provided by Asp226 and Glu227.

It belongs to the anthranilate phosphoribosyltransferase family. Homodimer. Mg(2+) serves as cofactor.

It carries out the reaction N-(5-phospho-beta-D-ribosyl)anthranilate + diphosphate = 5-phospho-alpha-D-ribose 1-diphosphate + anthranilate. It functions in the pathway amino-acid biosynthesis; L-tryptophan biosynthesis; L-tryptophan from chorismate: step 2/5. Catalyzes the transfer of the phosphoribosyl group of 5-phosphorylribose-1-pyrophosphate (PRPP) to anthranilate to yield N-(5'-phosphoribosyl)-anthranilate (PRA). This is Anthranilate phosphoribosyltransferase from Methanosarcina mazei (strain ATCC BAA-159 / DSM 3647 / Goe1 / Go1 / JCM 11833 / OCM 88) (Methanosarcina frisia).